The primary structure comprises 168 residues: Ribulose bisphosphate carboxylase small subunit, chloroplastic (168 aa).

Residues 1-28 constitute a chloroplast transit peptide; sequence MASIAAKSVSLRAATRRAAPVAAPADAR.

Belongs to the RuBisCO small chain family. As to quaternary structure, heterohexadecamer of 8 large and 8 small subunits.

It localises to the plastid. It is found in the chloroplast. Its function is as follows. RuBisCO catalyzes two reactions: the carboxylation of D-ribulose 1,5-bisphosphate, the primary event in carbon dioxide fixation, as well as the oxidative fragmentation of the pentose substrate. Both reactions occur simultaneously and in competition at the same active site. Although the small subunit is not catalytic it is essential for maximal activity. This Chlamydomonas moewusii (Chlamydomonas eugametos) protein is Ribulose bisphosphate carboxylase small subunit, chloroplastic.